We begin with the raw amino-acid sequence, 219 residues long: Probable GTP-binding protein EngB (219 aa).

One can recognise an EngB-type G domain in the interval 31–205 (VGVEIAFAGR…LSILNEWCHP (175 aa)). GTP contacts are provided by residues 39 to 46 (GRSNAGKS), 66 to 70 (GRTQL), 84 to 87 (DLPG), 151 to 154 (TKSD), and 184 to 186 (FSA). Mg(2+) is bound by residues Ser46 and Thr68.

It belongs to the TRAFAC class TrmE-Era-EngA-EngB-Septin-like GTPase superfamily. EngB GTPase family. The cofactor is Mg(2+).

Functionally, necessary for normal cell division and for the maintenance of normal septation. This Shewanella sp. (strain ANA-3) protein is Probable GTP-binding protein EngB.